The following is a 700-amino-acid chain: Protein UL29/28 (700 aa).

The disordered stretch occupies residues 1 to 30; the sequence is MSGRRKGCSAATASSSSSSPPSRLPLPGHA. Positions 9–21 are enriched in low complexity; it reads SAATASSSSSSPP.

It belongs to the herpesviridae US22 family. Interacts with UL38 and host HDAC1; these interactions are necessary for the HDAC1 interaction with UL38. Interacts with host MTA2.

The protein localises to the virion. It is found in the host nucleus. It localises to the host cytoplasm. Functionally, contributes to activation of immediate-early gene expression. The chain is Protein UL29/28 (UL29) from Human cytomegalovirus (strain Merlin) (HHV-5).